Reading from the N-terminus, the 327-residue chain is Putative HTH-type transcriptional regulatory protein MmarC6_0210 (327 aa).

The HTH cro/C1-type domain maps to 128–183; sequence LRETREKLKISVGELAEISRVSRKTIYKYEQNEANPSAEVAIKIEEYLDVPLIKGI. The H-T-H motif DNA-binding region spans 139–158; it reads VGELAEISRVSRKTIYKYEQ.

The protein is Putative HTH-type transcriptional regulatory protein MmarC6_0210 of Methanococcus maripaludis (strain C6 / ATCC BAA-1332).